The sequence spans 823 residues: Leucine--tRNA ligase (823 aa).

Residues 42–52 carry the 'HIGH' region motif; it reads PYPSGTLHMGH. The short motif at 575-579 is the 'KMSKS' region element; that stretch reads KMSKS. K578 provides a ligand contact to ATP.

Belongs to the class-I aminoacyl-tRNA synthetase family.

Its subcellular location is the cytoplasm. It catalyses the reaction tRNA(Leu) + L-leucine + ATP = L-leucyl-tRNA(Leu) + AMP + diphosphate. The sequence is that of Leucine--tRNA ligase from Legionella pneumophila (strain Corby).